The following is a 532-amino-acid chain: Vesicular acetylcholine transporter (532 aa).

Over 1–33 (MESAEPAGQARAAATKLSEAVGAALQEPRRQRR) the chain is Cytoplasmic. A helical membrane pass occupies residues 34–54 (LVLVIVCVALLLDNMLYMVIV). Over 55-125 (PIVPDYIAHM…PTESEDVKIG (71 aa)) the chain is Lumenal, vesicle. Asn-89 and Asn-96 each carry an N-linked (GlcNAc...) asparagine glycan. A helical transmembrane segment spans residues 126 to 146 (VLFASKAILQLLVNPLSGPFI). Residues 147 to 152 (DRMSYD) lie on the Cytoplasmic side of the membrane. Residues 153–173 (VPLLIGLGVMFASTVLFAFAE) traverse the membrane as a helical segment. The Lumenal, vesicle segment spans residues 174–182 (DYATLFAAR). The helical transmembrane segment at 183–203 (SLQGLGSAFADTSGIAMIADK) threads the bilayer. At 204–213 (YPEEPERSRA) the chain is on the cytoplasmic side. The chain crosses the membrane as a helical span at residues 214–234 (LGVALAFISFGSLVAPPFGGI). Over 235–242 (LYEFAGKR) the chain is Lumenal, vesicle. Residues 243–263 (VPFLVLAAVSLFDALLLLAVA) traverse the membrane as a helical segment. Residues 264–289 (KPFSAAARARANLPVGTPIHRLMLDP) are Cytoplasmic-facing. Residues 290–310 (YIAVVAGALTTCNIPLAFLEP) form a helical membrane-spanning segment. Residues 311 to 325 (TIATWMKHTMAASEW) lie on the Lumenal, vesicle side of the membrane. Residues 326–346 (EMGMAWLPAFVPHVLGVYLTV) traverse the membrane as a helical segment. The Cytoplasmic segment spans residues 347-356 (RLAARYPHLQ). A helical membrane pass occupies residues 357–377 (WLYGALGLAVIGASSCIVPAC). At 378–388 (RSFAPLVVSLC) the chain is on the lumenal, vesicle side. The helical transmembrane segment at 389–409 (GLCFGIALVDTALLPTLAFLV) threads the bilayer. The Cytoplasmic portion of the chain corresponds to 410-422 (DVRHVSVYGSVYA). The chain crosses the membrane as a helical span at residues 423-443 (IADISYSVAYALGPIVAGHIV). Residues 444–447 (HSLG) lie on the Lumenal, vesicle side of the membrane. The helical transmembrane segment at 448–468 (FEQLSLGMGLANLLYAPVLLL) threads the bilayer. The Cytoplasmic portion of the chain corresponds to 469–532 (LRNVGLLTRS…DDYNYYYTRS (64 aa)). Positions 471-532 (NVGLLTRSRS…DDYNYYYTRS (62 aa)) are mediates interaction with SEC14L1. The tract at residues 502-523 (RPVSGQDGEPRSPPGPFDACED) is disordered.

This sequence belongs to the major facilitator superfamily. Vesicular transporter family. As to quaternary structure, interacts with SEC14L1. Peripheral and central cholinergic nervous systems.

The protein localises to the cytoplasmic vesicle. It localises to the secretory vesicle. Its subcellular location is the synaptic vesicle membrane. It carries out the reaction acetylcholine(out) + 2 H(+)(in) = acetylcholine(in) + 2 H(+)(out). It catalyses the reaction choline(in) + 2 H(+)(out) = choline(out) + 2 H(+)(in). The enzyme catalyses serotonin(in) + 2 H(+)(out) = serotonin(out) + 2 H(+)(in). Its activity is regulated as follows. Potently inhibited by L-vesamicol, reserpine and tetrabenazine. Functionally, electrogenic antiporter that exchanges one cholinergic neurotransmitter, acetylcholine or choline, with two intravesicular protons across the membrane of synaptic vesicles. Uses the electrochemical proton gradient established by the V-type proton-pump ATPase to store neurotransmitters inside the vesicles prior to their release via exocytosis. Determines cholinergic vesicular quantal size at presynaptic nerve terminals in developing neuro-muscular junctions with an impact on motor neuron differentiation and innervation pattern. Part of forebrain cholinergic system, regulates hippocampal synapse transmissions that underlie spatial memory formation. Can transport serotonin. This chain is Vesicular acetylcholine transporter (SLC18A3), found in Homo sapiens (Human).